The primary structure comprises 86 residues: Large ribosomal subunit protein bL27 (86 aa).

A disordered region spans residues 1 to 24; that stretch reads MAHKKGTGSTRNGRDSNSKRLGVK.

It belongs to the bacterial ribosomal protein bL27 family.

The sequence is that of Large ribosomal subunit protein bL27 from Prochlorococcus marinus (strain MIT 9301).